Reading from the N-terminus, the 366-residue chain is MKRPATRTFGILTSGGDCPGLNAAIRGVTKAAYWRYGMSIIGISHGYRGLIEGDARLLHPRDFDGILTRGGTILGTSREKPFKPDPGEKDSEAGSRKVEAIIENYHKLHLDCLVVLGGNGTHKTAYLLQQAGLNVIGLPKTIDNDIWGTDVTFGFHSAVDIATEAIDRLHSTAHAHNRVMVIEVMGHKAGWLALYAGIAGGGDIILIPEIPYDLAHIVHHLQTRQQRGKEFSIVVVAEGALSREESLMSKEERKKRRKKNRFPTKGYEVAHLIQEATGMETRVTVLGYLQRGGTPSPYDRLLATRFGTAAAELLYRGDYGKMVALRDGEVVAIPLGEVAEKLKTVPPDHPLIDTARAVGTCFGDGV.

Residues Gly-16, 78 to 79, and 118 to 121 each bind ATP; these read RE and GNGT. Residues 74 to 94 are disordered; it reads LGTSREKPFKPDPGEKDSEAG. Positions 77–94 are enriched in basic and acidic residues; sequence SREKPFKPDPGEKDSEAG. Asn-119 serves as a coordination point for Mg(2+). Substrate is bound by residues 141–143, Arg-178, 185–187, Glu-238, Arg-282, and 288–291; these read TID, MGH, and YLQR. Asp-143 acts as the Proton acceptor in catalysis.

It belongs to the phosphofructokinase type A (PFKA) family. Mixed-substrate PFK group III subfamily. As to quaternary structure, homodimer or homotetramer. The cofactor is Mg(2+).

The protein resides in the cytoplasm. It carries out the reaction beta-D-fructose 6-phosphate + ATP = beta-D-fructose 1,6-bisphosphate + ADP + H(+). The protein operates within carbohydrate degradation; glycolysis; D-glyceraldehyde 3-phosphate and glycerone phosphate from D-glucose: step 3/4. In terms of biological role, catalyzes the phosphorylation of D-fructose 6-phosphate to fructose 1,6-bisphosphate by ATP, the first committing step of glycolysis. The protein is ATP-dependent 6-phosphofructokinase of Spirochaeta thermophila (strain ATCC 49972 / DSM 6192 / RI 19.B1).